Reading from the N-terminus, the 359-residue chain is E3 ubiquitin-protein ligase RNF146 (359 aa).

The RING-type zinc finger occupies 38–76; it reads CAICLQTCVHPVSLPCKHVFCYLCVKGASWLGKRCALCR. Glycyl lysine isopeptide (Lys-Gly) (interchain with G-Cter in ubiquitin) cross-links involve residues lysine 86 and lysine 96. Positions 93-169 constitute a WWE domain; the sequence is EELKAASRGN…EHGRRRKIKR (77 aa). The a glycoprotein site is built by tyrosine 109, arginine 112, and tryptophan 116. A Glycyl lysine isopeptide (Lys-Gly) (interchain with G-Cter in ubiquitin) cross-link involves residue lysine 132. Tyrosine 146, glutamine 155, arginine 165, and lysine 177 together coordinate a glycoprotein. Lysine 177 is covalently cross-linked (Glycyl lysine isopeptide (Lys-Gly) (interchain with G-Cter in ubiquitin)). Disordered stretches follow at residues 197–243 and 261–359; these read SSAD…DAGI and ERSH…VTEV. Residues 199 to 212 are compositionally biased toward low complexity; that stretch reads ADGADSGSAQTGAS. A compositionally biased stretch (polar residues) spans 217–235; sequence VPSSTRPLTSVDGQLTSPV. Residues 284–298 are compositionally biased toward acidic residues; sequence SVEETESDASSDSED. 2 positions are modified to phosphoserine: serine 290 and serine 294. The segment covering 306–324 has biased composition (polar residues); that stretch reads HSLTQQRPLVPNGNQTVAD.

Can form homooligomers. Interacts with PARsylated AXIN1, AXIN2, BLZF1, CASC3, H1-2, IPO7, LIG3, NCL, PARP1, XRCC1, XRCC5 and XRCC6. Interacts with DDB1, DHX15, IQGAP1, LRPPRC, PARP2, PRKDC, RUVBL2, TNKS1 and TNKS2. Binding often leads to interactor ubiquitination, in the presence of the appropriate E1 and E2 enzymes, and proteasomal degradation. Ubiquitinated; autoubiquitinated. Autoubiquitination is enhanced upon PAR-binding. As to expression, expressed at relatively high levels in the brain. Also present in spleen, heart, kidney, testis and liver. In the brain, expressed in the cerebellum, hippocampus, striatum, cortex, frontal cortex and, at lowest levels, in olfactory bulb (at protein level). Predominantly expressed in neurons.

It is found in the cytoplasm. Its subcellular location is the cytosol. The protein localises to the nucleus. The enzyme catalyses S-ubiquitinyl-[E2 ubiquitin-conjugating enzyme]-L-cysteine + [acceptor protein]-L-lysine = [E2 ubiquitin-conjugating enzyme]-L-cysteine + N(6)-ubiquitinyl-[acceptor protein]-L-lysine.. It functions in the pathway protein modification; protein ubiquitination. Its function is as follows. E3 ubiquitin-protein ligase that specifically binds poly-ADP-ribosylated (PARsylated) proteins and mediates their ubiquitination and subsequent degradation. May regulate many important biological processes, such as cell survival and DNA damage response. Acts as an activator of the Wnt signaling pathway by mediating the ubiquitination of PARsylated AXIN1 and AXIN2, 2 key components of the beta-catenin destruction complex. Acts in cooperation with tankyrase proteins (TNKS and TNKS2), which mediate PARsylation of target proteins AXIN1, AXIN2, BLZF1, CASC3, TNKS and TNKS2. Recognizes and binds tankyrase-dependent PARsylated proteins via its WWE domain and mediates their ubiquitination, leading to their degradation. Different ubiquitin linkage types have been observed: TNKS2 undergoes ubiquitination at 'Lys-48' and 'Lys-63', while AXIN1 is only ubiquitinated at 'Lys-48'. May regulate TNKS and TNKS2 subcellular location, preventing aggregation at a centrosomal location. Neuroprotective protein. Protects the brain against N-methyl-D-aspartate (NMDA) receptor-mediated glutamate excitotoxicity and ischemia, by interfering with PAR-induced cell death, called parthanatos. Prevents nuclear translocation of AIFM1 in a PAR-binding dependent manner. Does not affect PARP1 activation. Protects against cell death induced by DNA damaging agents, such as N-methyl-N-nitro-N-nitrosoguanidine (MNNG) and rescues cells from G1 arrest. Promotes cell survival after gamma-irradiation. Facilitates DNA repair. The chain is E3 ubiquitin-protein ligase RNF146 (Rnf146) from Mus musculus (Mouse).